A 423-amino-acid polypeptide reads, in one-letter code: Heat shock transcription factor, X-linked (423 aa).

Positions 1–25 (MEDKRSLSMARCEERNSRGQDHGLE) are enriched in basic and acidic residues. Disordered regions lie at residues 1–56 (MEDK…STGS), 215–303 (KSAP…EGSQ), and 397–423 (PHSH…DQST). A DNA-binding region spans residues 98-282 (PFPQKLWRLV…PATPVMVPDS (185 aa)). Residue Lys215 forms a Glycyl lysine isopeptide (Lys-Gly) (interchain with G-Cter in SUMO1) linkage. Residues 243–254 (HTSPNENDQVTP) show a composition bias toward polar residues.

This sequence belongs to the HSF family. Testis-specific.

The protein localises to the nucleus. It localises to the cytoplasm. This chain is Heat shock transcription factor, X-linked (HSFX1), found in Homo sapiens (Human).